A 240-amino-acid polypeptide reads, in one-letter code: Probable transcriptional regulatory protein Csal_0810 (240 aa).

The protein belongs to the TACO1 family.

The protein resides in the cytoplasm. In Chromohalobacter salexigens (strain ATCC BAA-138 / DSM 3043 / CIP 106854 / NCIMB 13768 / 1H11), this protein is Probable transcriptional regulatory protein Csal_0810.